Here is a 2028-residue protein sequence, read N- to C-terminus: MQVKKSWIEGVFYKRECNKFIPSSKDPHRCTPGCQICHNLVRCYCGRLIEEHHGLDRAWNLSVTEGHGDEQWSVEKHTVKSPTDTFGTINFQDGEHIHHSKYIRTSWDTKSDHLLHLMLKEWNMELPKLVISVHGGLQNFKISSKLKETFSQGLVKAAETTGAWIITEGINSGVSKHVGDALKAHSSKSLRKIWTVGIPPWGVIENQRELVGKDVVCMYQTLGNPLSKLTTLNCMHSHFILCDDGTVGMYGNEEKLRRNLEKHLSMQKIHTCSRQGVPVVGLVMEGGPNVILWVWETVKNKEPVVVCEGTGRAADLLAFTYKHLEDGGILRPQVKEELFCLIQNMFNFSLRQSKHLFQILMECMVHKDSITIFDADSEEHQDLDLAILTALLKGTSLSISEQLNLAMAWDRMDIAKKHILTYGQHWKPGALEQAMLDALVMDRVDFVKLLIENGVNLHRFLTIPRLEELYNTKQGPTNKFLRHLVQDVKQHTLLSSYRITLIDIGLVIEYLIGGAYRSSYTRKSFRILYNNLYRKHKSVSSFAQGLSQHSLHQRHSLRNRKESSESTLHSQFFRTAQPYKSKEKPEDSQKSKKKSKERQSLSEEPEAAGFIYPYNDLLVWAVLMKRQNMAMFFWQHGEEATVKAVIASILYRAMAREAKESNMVDDTSEELKNYSEQFGQLALDVLEKAFKQNEPMAMKLLTYELKNWSNSTCLKLAVSGGLRPFVSHSCTQMLLTDMWMGRLKMRKNSWLKIIISILLPPMILTLEFKSKAEMSHVPQSQDFQFTWNYSDQGLSNTKESACVKDYDLERGPDEKPDEPLHLDLRNVPQSLPWTRRVYEFYSAPFVKFWFYTMAYLAFLMLFTYTVLVEMQPQPSVHEWLVIIYIFTNAIEKVREICISEPSKFKQKVKMWLSEYWNLMETVAIGLFAVGFGLRWGHPPLQTAGRLIYCIDIIFWFSRLMDFFAVNQHAGPYVTMIAKMAANMFYIVIIMAIVLLSFGVARKAILSPKEPPSWRLARDIVFEPYWMMYGEVYASDIDVCSNETSCPPGSFLTPFLQAVYLFVQYIIMVNLLIACFNNIYLDIKSISNKLWKYNRYRYIMTYHQKPWLPPPFILLNHLCLLLRGLCCRPAPQDQEEGDGGLKLYLTKDDLKKLHDFEEQCVEKYFHEKTEGLNCSFEEQIRMTSERVSEMFFQLKEMNEKVSFIKDSLLSLDSQVGHLQDLSAITVDTLKVLSAVDTLQEDEILLANRKHSTCRKRPHSWTNVICAKVLSDMESCGKKKLQYYSMPPSLLRSLARSQLPPSVQRGALVEVTHSKREASHVREEQEEREMEQRTTASGISHVRQAHSKYGQFLLVPSSGKQVPLSLETPPHLFRSSEEAGIDGLVLEHIHQSDLTTHLPQQTPAASHQALVAEHKDQHEAVTQMSDKPAKAEQDLLAFSGTPAPMTVTSLPSRAISMQDEGGYVNWAFSENDETGVFSFKKKWKTCLASTCNSDSNPGGDYFLHTGGRSGLDNSRRLAQSCECPAGPWTQARRSFWINPLCRDKALIKSHSFRFHKEEKLRKTWKNNSHSKSLETRSTWLKAKLLTKTRSLSKKKRKTQGLQVPVITVNACYQSDQLNAEPGETNTTEEFSKKWLSVSNFSQIGLEPYIYQKMKMKEIKRHTTQASDHLRQPQENRDKTPTWNSGSTSLSRSFLTRSPNEVHKISTSLKSPQEPHHHYSAIERNNLMRLSQTIPFTPIQLFTGEEVTIYKLEESSPLTLDKSMSSWSQHGRAAMIQVLSQEEMDGGLRKAMRVISTWSEDDVLKPGQVFIVKSFLPEVVQTWYKIFQESTVLHLCLREIQQQRAAQKLIYTFNQVKPQTIPYTPRFLEVSLVYCHSANQWLTIEKYMTGEFRKYNNNNGDEIAPTNTLEELMLAFSHWTYEYTRGELLVLDLQGVGENLTDPSVIKPEDKQSRGMVFGPANLGEDAIRSFIAKHRCNSCCGKLRLPDLKRNDYSLSRTHCNLGFGQTIEPTEELPERDKNRSSLEDHTRL.

Residues Met1–Lys747 lie on the Cytoplasmic side of the membrane. The disordered stretch occupies residues Gln577–Leu601. A compositionally biased stretch (basic and acidic residues) spans Lys580–Lys590. A helical transmembrane segment spans residues Asn748–Phe768. Residues Lys769–Lys847 lie on the Extracellular side of the membrane. The helical transmembrane segment at Phe848–Val868 threads the bilayer. Residues Glu869–Met910 are Cytoplasmic-facing. Residues Trp911–Phe931 form a helical membrane-spanning segment. Residues Gly932–Arg945 lie on the Extracellular side of the membrane. The helical transmembrane segment at Leu946–Asn966 threads the bilayer. Residues Gln967–Lys978 are Cytoplasmic-facing. The chain crosses the membrane as a helical span at residues Met979 to Val999. Residues Ala1000–Asp1018 are Extracellular-facing. Positions Ile1019–Cys1039 form an intramembrane region, pore-forming. Over Ser1040 to Pro1053 the chain is Extracellular. Residues Phe1054–Cys1074 form a helical membrane-spanning segment. Topologically, residues Phe1075–Leu2028 are cytoplasmic. 2 stretches are compositionally biased toward basic and acidic residues: residues Lys1313–Gln1323 and Asp1665–Thr1677. Disordered regions lie at residues Lys1313–His1339 and Arg1658–Arg1694. Over residues Ser1682–Arg1694 the composition is skewed to low complexity. Phosphothreonine; by autocatalysis is present on Thr1730. The region spanning Thr1756 to Leu1986 is the Alpha-type protein kinase domain. 5 residues coordinate ADP: Gly1783, Gly1784, Leu1785, Arg1786, and Lys1810. Phosphothreonine; by autocatalysis is present on Thr1857. Residues Glu1882 and Met1885 each contribute to the ADP site. His1915 is a binding site for Zn(2+). Asp1929 acts as the Proton acceptor in catalysis. Residue Asp1939 participates in ADP binding. Residues His1972, Cys1974, and Cys1978 each coordinate Zn(2+). The segment at Thr2009 to Leu2028 is disordered. Basic and acidic residues predominate over residues Leu2012–Leu2028.

This sequence in the C-terminal section; belongs to the protein kinase superfamily. Alpha-type protein kinase family. ALPK subfamily. It in the N-terminal section; belongs to the transient receptor (TC 1.A.4) family. LTrpC subfamily. TRPM6 sub-subfamily. Forms heteromers with TRPM7; TRPM6 increases the current amplitude of TRPM6/7 heteromers as compared to TRPM7 homomers. Interacts (via kinase domain) with RACK1. In terms of processing, autophosphorylated; autophosphorylation controls the protein kinase activity of TRPM6 towards their substrates. Autophosphorylation of Thr-1857 in the kinase domain is essential for the inhibitory effect of RACK1. Post-translationally, the C-terminus of TRPM6 is proteolytically cleaved in vivo, in a cell type-specific fashion, releasing the kinase module from the transmembrane domain. The cleaved kinase fragments are translocated to the nucleus to phosphorylate histones and regulate gene expression.

It localises to the cell membrane. The protein localises to the apical cell membrane. The protein resides in the nucleus. It carries out the reaction L-seryl-[protein] + ATP = O-phospho-L-seryl-[protein] + ADP + H(+). The enzyme catalyses L-threonyl-[protein] + ATP = O-phospho-L-threonyl-[protein] + ADP + H(+). It catalyses the reaction Mg(2+)(in) = Mg(2+)(out). The catalysed reaction is Ca(2+)(in) = Ca(2+)(out). It carries out the reaction Zn(2+)(in) = Zn(2+)(out). Strongly inhibited by intracellular Mg(2+); unlikely to be active at physiological levels of intracellular Mg(2+). In the heteromeric TRPM6-TRPM7 channels complexes, TRPM7 are able to offset the very high sensitivity of TRPM6 to cytosolic Mg(2+) to physiologically relevant concentrations, whereas TRPM6 relieve TRPM7 from the inhibitory action of Mg-ATP. Consequently, the association of TRPM6 with TRPM7 allow for high constitutive activity of TRPM6/7 in the presence of physiological levels of Mg(2+) and Mg-ATP. The kinase activity is controlled through the autophosphorylation of a serine/threonine-rich region located to the N-terminal of the catalytic domain. Its function is as follows. Bifunctional protein that combines an ion channel with an intrinsic kinase domain, enabling it to modulate cellular functions either by conducting ions through the pore or by phosphorylating downstream proteins via its kinase domain. Crucial for Mg(2+) homeostasis. Has an important role in epithelial magnesium transport and in the active Mg(2+) absorption in the gut and kidney. However, whether TRPM6 forms functional homomeric channels by itself or functions primarily as a subunit of heteromeric TRPM6-TRPM7 channels, is still under debate. The C-terminal kinase domain can be cleaved from the channel segment in a cell-type-specific fashion. The cleaved kinase fragments can translocate to the nucleus, and bind chromatin-remodeling complex proteins to ultimately phosphorylate specific Ser/Thr residues of histones known to be functionally important for cell differentiation and development. The sequence is that of Transient receptor potential cation channel subfamily M member 6 (Trpm6) from Mus musculus (Mouse).